Consider the following 382-residue polypeptide: 1-deoxy-D-xylulose 5-phosphate reductoisomerase (382 aa).

NADPH-binding residues include threonine 10, glycine 11, serine 12, isoleucine 13, asparagine 38, and asparagine 120. Residue lysine 121 participates in 1-deoxy-D-xylulose 5-phosphate binding. Glutamate 122 provides a ligand contact to NADPH. Position 146 (aspartate 146) interacts with Mn(2+). Serine 147, glutamate 148, serine 172, and histidine 195 together coordinate 1-deoxy-D-xylulose 5-phosphate. Glutamate 148 contacts Mn(2+). Glycine 201 is an NADPH binding site. The 1-deoxy-D-xylulose 5-phosphate site is built by serine 208, asparagine 213, lysine 214, and glutamate 217. Mn(2+) is bound at residue glutamate 217.

The protein belongs to the DXR family. Mg(2+) serves as cofactor. Mn(2+) is required as a cofactor.

It carries out the reaction 2-C-methyl-D-erythritol 4-phosphate + NADP(+) = 1-deoxy-D-xylulose 5-phosphate + NADPH + H(+). Its pathway is isoprenoid biosynthesis; isopentenyl diphosphate biosynthesis via DXP pathway; isopentenyl diphosphate from 1-deoxy-D-xylulose 5-phosphate: step 1/6. In terms of biological role, catalyzes the NADPH-dependent rearrangement and reduction of 1-deoxy-D-xylulose-5-phosphate (DXP) to 2-C-methyl-D-erythritol 4-phosphate (MEP). In Caldanaerobacter subterraneus subsp. tengcongensis (strain DSM 15242 / JCM 11007 / NBRC 100824 / MB4) (Thermoanaerobacter tengcongensis), this protein is 1-deoxy-D-xylulose 5-phosphate reductoisomerase.